We begin with the raw amino-acid sequence, 78 residues long: Neurotoxin 3FTx-LK (78 aa).

A signal peptide spans 1–21; that stretch reads MKTLLLTLVVVTIVCLDLGYT. Intrachain disulfides connect C24–C42, C35–C60, C64–C70, and C71–C76.

In terms of tissue distribution, expressed by the venom gland.

The protein localises to the secreted. Blocks both the muscle-twitch response to nerve stimulation and the response to exogenous acetylcholine. The polypeptide is Neurotoxin 3FTx-LK (Bungarus fasciatus (Banded krait)).